The following is a 176-amino-acid chain: Zinc finger A20 and AN1 domain-containing stress-associated protein 9 (176 aa).

An A20-type zinc finger spans residues 16 to 50 (ASEPKLCVKGCGFFGSPSNMDLCSKCYRGICAEEA). Zn(2+) contacts are provided by C22, C26, C38, C41, C117, C120, C131, C133, C138, H141, H147, and C149. The segment at 111–157 (PARTNRCLCCNKKVGIMGFKCKCGSTFCGEHRYPETHDCSFDFKEVG) adopts an AN1-type zinc-finger fold.

May be involved in environmental stress response. This chain is Zinc finger A20 and AN1 domain-containing stress-associated protein 9 (SAP9), found in Arabidopsis thaliana (Mouse-ear cress).